The chain runs to 475 residues: F-box protein At3g59150 (475 aa).

One can recognise an F-box domain in the interval G12–D58.

The protein is F-box protein At3g59150 of Arabidopsis thaliana (Mouse-ear cress).